A 162-amino-acid polypeptide reads, in one-letter code: SsrA-binding protein (162 aa).

Residues 140-162 (DKRETAAKRDWSRQKSRLMKDHG) are disordered.

Belongs to the SmpB family.

It localises to the cytoplasm. Required for rescue of stalled ribosomes mediated by trans-translation. Binds to transfer-messenger RNA (tmRNA), required for stable association of tmRNA with ribosomes. tmRNA and SmpB together mimic tRNA shape, replacing the anticodon stem-loop with SmpB. tmRNA is encoded by the ssrA gene; the 2 termini fold to resemble tRNA(Ala) and it encodes a 'tag peptide', a short internal open reading frame. During trans-translation Ala-aminoacylated tmRNA acts like a tRNA, entering the A-site of stalled ribosomes, displacing the stalled mRNA. The ribosome then switches to translate the ORF on the tmRNA; the nascent peptide is terminated with the 'tag peptide' encoded by the tmRNA and targeted for degradation. The ribosome is freed to recommence translation, which seems to be the essential function of trans-translation. In Roseobacter denitrificans (strain ATCC 33942 / OCh 114) (Erythrobacter sp. (strain OCh 114)), this protein is SsrA-binding protein.